Here is a 99-residue protein sequence, read N- to C-terminus: Small ribosomal subunit protein bS20 (99 aa).

The protein belongs to the bacterial ribosomal protein bS20 family.

Functionally, binds directly to 16S ribosomal RNA. In Synechococcus sp. (strain CC9311), this protein is Small ribosomal subunit protein bS20.